The chain runs to 94 residues: MKESNSNSVKEDVEGIKKDIESLVSRLRNLKGKTGDILDEQLGNLSSVMEHYKDKGIEKGKANLADLCESTRNNPLRNLAYAFGAGVLLAILMK.

This is an uncharacterized protein from Rickettsia prowazekii (strain Madrid E).